The following is a 95-amino-acid chain: MSVDQATVRRIAHLARIKVSDEDVPHLQDELNAILRFVEELAAVDVEGVEAMTSVMPMPMKKRQDIVTEGEIPDVILANAPEREDHFFKVPKVVE.

This sequence belongs to the GatC family. In terms of assembly, heterotrimer of A, B and C subunits.

It carries out the reaction L-glutamyl-tRNA(Gln) + L-glutamine + ATP + H2O = L-glutaminyl-tRNA(Gln) + L-glutamate + ADP + phosphate + H(+). The catalysed reaction is L-aspartyl-tRNA(Asn) + L-glutamine + ATP + H2O = L-asparaginyl-tRNA(Asn) + L-glutamate + ADP + phosphate + 2 H(+). In terms of biological role, allows the formation of correctly charged Asn-tRNA(Asn) or Gln-tRNA(Gln) through the transamidation of misacylated Asp-tRNA(Asn) or Glu-tRNA(Gln) in organisms which lack either or both of asparaginyl-tRNA or glutaminyl-tRNA synthetases. The reaction takes place in the presence of glutamine and ATP through an activated phospho-Asp-tRNA(Asn) or phospho-Glu-tRNA(Gln). The protein is Aspartyl/glutamyl-tRNA(Asn/Gln) amidotransferase subunit C of Methylocella silvestris (strain DSM 15510 / CIP 108128 / LMG 27833 / NCIMB 13906 / BL2).